The following is a 198-amino-acid chain: HTH-type transcriptional regulator BetI (198 aa).

Residues Pro-8 to Leu-68 form the HTH tetR-type domain. Residues Ser-31–Phe-50 constitute a DNA-binding region (H-T-H motif).

It functions in the pathway amine and polyamine biosynthesis; betaine biosynthesis via choline pathway [regulation]. Its function is as follows. Repressor involved in the biosynthesis of the osmoprotectant glycine betaine. It represses transcription of the choline transporter BetT and the genes of BetAB involved in the synthesis of glycine betaine. The protein is HTH-type transcriptional regulator BetI of Yersinia pseudotuberculosis serotype O:1b (strain IP 31758).